The sequence spans 371 residues: Queuine tRNA-ribosyltransferase (371 aa).

The Proton acceptor role is filled by D90. Residues 90–94, D144, Q185, and G212 contribute to the substrate site; that span reads DSGGF. Residues 243–249 form an RNA binding region; sequence GVGTPED. Catalysis depends on D262, which acts as the Nucleophile. The RNA binding; important for wobble base 34 recognition stretch occupies residues 267 to 271; it reads TRNAR. 4 residues coordinate Zn(2+): C300, C302, C305, and H331.

The protein belongs to the queuine tRNA-ribosyltransferase family. As to quaternary structure, homodimer. Within each dimer, one monomer is responsible for RNA recognition and catalysis, while the other monomer binds to the replacement base PreQ1. Requires Zn(2+) as cofactor.

It carries out the reaction 7-aminomethyl-7-carbaguanine + guanosine(34) in tRNA = 7-aminomethyl-7-carbaguanosine(34) in tRNA + guanine. Its pathway is tRNA modification; tRNA-queuosine biosynthesis. Catalyzes the base-exchange of a guanine (G) residue with the queuine precursor 7-aminomethyl-7-deazaguanine (PreQ1) at position 34 (anticodon wobble position) in tRNAs with GU(N) anticodons (tRNA-Asp, -Asn, -His and -Tyr). Catalysis occurs through a double-displacement mechanism. The nucleophile active site attacks the C1' of nucleotide 34 to detach the guanine base from the RNA, forming a covalent enzyme-RNA intermediate. The proton acceptor active site deprotonates the incoming PreQ1, allowing a nucleophilic attack on the C1' of the ribose to form the product. After dissociation, two additional enzymatic reactions on the tRNA convert PreQ1 to queuine (Q), resulting in the hypermodified nucleoside queuosine (7-(((4,5-cis-dihydroxy-2-cyclopenten-1-yl)amino)methyl)-7-deazaguanosine). This is Queuine tRNA-ribosyltransferase from Acidithiobacillus ferrooxidans (strain ATCC 23270 / DSM 14882 / CIP 104768 / NCIMB 8455) (Ferrobacillus ferrooxidans (strain ATCC 23270)).